A 728-amino-acid chain; its full sequence is 1,4-alpha-glucan branching enzyme GlgB (728 aa).

Aspartate 405 (nucleophile) is an active-site residue. The active-site Proton donor is the glutamate 458. Residues 686 to 712 form a disordered region; it reads YHGSNAGNAGAVQSDEHESHGRPHSLS.

It belongs to the glycosyl hydrolase 13 family. GlgB subfamily. Monomer.

It carries out the reaction Transfers a segment of a (1-&gt;4)-alpha-D-glucan chain to a primary hydroxy group in a similar glucan chain.. It participates in glycan biosynthesis; glycogen biosynthesis. In terms of biological role, catalyzes the formation of the alpha-1,6-glucosidic linkages in glycogen by scission of a 1,4-alpha-linked oligosaccharide from growing alpha-1,4-glucan chains and the subsequent attachment of the oligosaccharide to the alpha-1,6 position. This is 1,4-alpha-glucan branching enzyme GlgB from Enterobacter sp. (strain 638).